The sequence spans 840 residues: Axin-2 (840 aa).

The segment at 1 to 75 (MSSAVLVTLL…EGRASPDSPL (75 aa)) is disordered. Positions 21–30 (APRPPVPGEE) match the Tankyrase-binding motif motif. Polar residues predominate over residues 42-55 (KVQSTKPMPVSSNA). Positions 56 to 69 (RRNEDGLGEPEGRA) are enriched in basic and acidic residues. The region spanning 81-200 (SLHSLLGDQD…LTSDIYLEYV (120 aa)) is the RGS domain. Disordered regions lie at residues 300 to 363 (SELS…KEMT), 398 to 435 (IRED…EEDP), 447 to 485 (LKTP…LLPT), 572 to 614 (RGGT…GDRS), and 715 to 745 (ASQQ…EDHK). The span at 303–318 (SSDALTDDSMSMTDSS) shows a compositional bias: low complexity. Residues 327–413 (MGSKKQLQRE…KEGSEQALSS (87 aa)) are interaction with GSK3B. The interaction with beta-catenin stretch occupies residues 413-478 (SRDGAPVQHP…HHHQHHHHQQ (66 aa)). Over residues 468-478 (DHHHQHHHHQQ) the composition is skewed to basic residues. The region spanning 758–840 (ASELVVTYFF…RILGKVERID (83 aa)) is the DIX domain.

As to quaternary structure, interacts with glycogen synthase kinase-3 beta (GSK3B) and beta-catenin. The interaction between axin and beta-catenin occurs via the armadillo repeats contained in beta-catenin. Interacts with SMAD7 and RNF111. Interacts with ANKRD6. Interacts with SIAH1. Interacts with SIAH2. ADP-ribosylated by tankyrase TNKS and TNKS2. Poly-ADP-ribosylated protein is recognized by RNF146, followed by ubiquitination and subsequent activation of the Wnt signaling pathway. In terms of processing, ubiquitinated by RNF146 when poly-ADP-ribosylated, leading to its degradation and subsequent activation of the Wnt signaling pathway. Deubiquitinated by USP34, deubiquitinated downstream of beta-catenin stabilization step: deubiquitination is important Wnt signaling to positively regulate beta-catenin (CTNBB1)-mediated transcription. Post-translationally, probably phosphorylated by GSK3B and dephosphorylated by PP2A. As to expression, expressed in Tcf7-positive innate-like T-cells (at protein level).

Its subcellular location is the cytoplasm. Inhibitor of the Wnt signaling pathway. Down-regulates beta-catenin. Probably facilitate the phosphorylation of beta-catenin and APC by GSK3B. The protein is Axin-2 of Mus musculus (Mouse).